A 355-amino-acid chain; its full sequence is Guanine nucleotide-binding protein G(o) subunit alpha (355 aa).

Positions Met-1 to Gln-17 are enriched in low complexity. Residues Met-1 to Lys-24 form a disordered region. Residue Gly-2 is the site of N-myristoyl glycine attachment. A lipid anchor (S-palmitoyl cysteine) is attached at Cys-3. One can recognise a G-alpha domain in the interval Lys-32 to Tyr-355. A G1 motif region spans residues Lys-35–Thr-48. GTP contacts are provided by residues Gly-40 to Ser-47, Leu-176 to Thr-182, Asp-201 to Gly-205, Asp-201 to Gln-206, Asn-271 to Asp-274, and Ala-327. Ser-47 and Thr-182 together coordinate Mg(2+). Residues Asp-174–Thr-182 form a G2 motif region. A G3 motif region spans residues Phe-197–Gln-206. Residues Ile-267–Asp-274 are G4 motif. The segment at Thr-326–Thr-330 is G5 motif.

It belongs to the G-alpha family. G(i/o/t/z) subfamily. As to quaternary structure, g proteins are composed of 3 units; alpha, beta and gamma. The alpha chain contains the guanine nucleotide binding site.

Guanine nucleotide-binding proteins (G proteins) are involved as modulators or transducers in various transmembrane signaling systems. The G(o) protein function is not clear. In Manduca sexta (Tobacco hawkmoth), this protein is Guanine nucleotide-binding protein G(o) subunit alpha.